We begin with the raw amino-acid sequence, 652 residues long: Acetyl-coenzyme A synthetase (652 aa).

CoA-binding positions include 191–194 (RAGR), T311, and N335. Residues 387–389 (GEP), 411–416 (DTWWQT), D500, and R515 contribute to the ATP site. Residue S523 coordinates CoA. R526 is a binding site for ATP. The Mg(2+) site is built by V537, H539, and I542. R584 serves as a coordination point for CoA. K609 bears the N6-acetyllysine mark.

The protein belongs to the ATP-dependent AMP-binding enzyme family. It depends on Mg(2+) as a cofactor. In terms of processing, acetylated. Deacetylation by the SIR2-homolog deacetylase activates the enzyme.

It catalyses the reaction acetate + ATP + CoA = acetyl-CoA + AMP + diphosphate. Its function is as follows. Catalyzes the conversion of acetate into acetyl-CoA (AcCoA), an essential intermediate at the junction of anabolic and catabolic pathways. Acs undergoes a two-step reaction. In the first half reaction, Acs combines acetate with ATP to form acetyl-adenylate (AcAMP) intermediate. In the second half reaction, it can then transfer the acetyl group from AcAMP to the sulfhydryl group of CoA, forming the product AcCoA. Functionally, enables the cell to use acetate during aerobic growth to generate energy via the TCA cycle, and biosynthetic compounds via the glyoxylate shunt. Acetylates CheY, the response regulator involved in flagellar movement and chemotaxis. The protein is Acetyl-coenzyme A synthetase of Citrobacter koseri (strain ATCC BAA-895 / CDC 4225-83 / SGSC4696).